Reading from the N-terminus, the 323-residue chain is Sphingolipid delta(4)-desaturase DES1 (323 aa).

Gly-2 carries N-myristoyl glycine lipidation. 2 helical membrane passes run 41-61 (PNLIWIVTSMLLVQLASFYLV) and 68-88 (WLMFWSYAFGSCLNHSMTLAI). Positions 89-93 (HEISH) match the Histidine box-1 motif. A helical membrane pass occupies residues 104-124 (WNRWFGMFANLSLGVPYSISF). Residues 128–132 (HMDHH) carry the Histidine box-2 motif. The next 3 helical transmembrane spans lie at 152 to 172 (FFCTTLRKLVWVILQPLFYAF), 184 to 204 (HLEVINTVIQVTFDVLVYYVF), and 210 to 230 (VYMLAASLLGLGLHPISGHFI). The Histidine box-3 motif lies at 259–263 (HNEHH). Ser-307 carries the post-translational modification Phosphoserine.

This sequence belongs to the fatty acid desaturase type 1 family. DEGS subfamily. As to quaternary structure, interacts with RLBP1; the interaction increases synthesis of chromophore-precursors by DEGS1. Post-translationally, myristoylation can target the enzyme to the mitochondria leading to an increase in ceramide levels.

It is found in the mitochondrion membrane. The protein localises to the endoplasmic reticulum membrane. The enzyme catalyses an N-acylsphinganine + 2 Fe(II)-[cytochrome b5] + O2 + 2 H(+) = an N-acylsphing-4-enine + 2 Fe(III)-[cytochrome b5] + 2 H2O. It catalyses the reaction all-trans-retinol = 11-cis-retinol. It carries out the reaction all-trans-retinol = 9-cis-retinol. The catalysed reaction is all-trans-retinol = 13-cis-retinol. The enzyme catalyses 11-cis-retinol = 13-cis-retinol. It catalyses the reaction 11-cis-retinol = 9-cis-retinol. Has sphingolipid-delta-4-desaturase activity. Converts D-erythro-sphinganine to D-erythro-sphingosine (E-sphing-4-enine). Catalyzes the equilibrium isomerization of retinols. This Rattus norvegicus (Rat) protein is Sphingolipid delta(4)-desaturase DES1.